The sequence spans 264 residues: S-adenosylmethionine decarboxylase proenzyme (264 aa).

Ser-112 serves as the catalytic Schiff-base intermediate with substrate; via pyruvic acid. Ser-112 is subject to Pyruvic acid (Ser); by autocatalysis. His-117 serves as the catalytic Proton acceptor; for processing activity. The Proton donor; for catalytic activity role is filled by Cys-140.

Belongs to the prokaryotic AdoMetDC family. Type 2 subfamily. In terms of assembly, heterooctamer of four alpha and four beta chains arranged as a tetramer of alpha/beta heterodimers. The cofactor is pyruvate. In terms of processing, is synthesized initially as an inactive proenzyme. Formation of the active enzyme involves a self-maturation process in which the active site pyruvoyl group is generated from an internal serine residue via an autocatalytic post-translational modification. Two non-identical subunits are generated from the proenzyme in this reaction, and the pyruvate is formed at the N-terminus of the alpha chain, which is derived from the carboxyl end of the proenzyme. The post-translation cleavage follows an unusual pathway, termed non-hydrolytic serinolysis, in which the side chain hydroxyl group of the serine supplies its oxygen atom to form the C-terminus of the beta chain, while the remainder of the serine residue undergoes an oxidative deamination to produce ammonia and the pyruvoyl group blocking the N-terminus of the alpha chain.

It catalyses the reaction S-adenosyl-L-methionine + H(+) = S-adenosyl 3-(methylsulfanyl)propylamine + CO2. The protein operates within amine and polyamine biosynthesis; S-adenosylmethioninamine biosynthesis; S-adenosylmethioninamine from S-adenosyl-L-methionine: step 1/1. Its function is as follows. Catalyzes the decarboxylation of S-adenosylmethionine to S-adenosylmethioninamine (dcAdoMet), the propylamine donor required for the synthesis of the polyamines spermine and spermidine from the diamine putrescine. This is S-adenosylmethionine decarboxylase proenzyme from Salmonella arizonae (strain ATCC BAA-731 / CDC346-86 / RSK2980).